The following is a 326-amino-acid chain: Undecaprenyl-phosphate 4-deoxy-4-formamido-L-arabinose transferase (326 aa).

Over 1–235 the chain is Cytoplasmic; it reads MFEIHPIKKV…TCLTTTPLRM (235 aa). The helical transmembrane segment at 236 to 256 threads the bilayer; that stretch reads LSLLGSIIATSGFSLAILLVV. Residues 257–269 are Periplasmic-facing; the sequence is LRLAFGSQWSGEG. A helical membrane pass occupies residues 270–290; that stretch reads VFMLFAVLFTFIGAQFIGMGL. Residues 291-326 are Cytoplasmic-facing; sequence LGEYIGRIYNDVRARPRYFVQKVIRPASSIDIEENH.

Belongs to the glycosyltransferase 2 family.

The protein resides in the cell inner membrane. The catalysed reaction is UDP-4-deoxy-4-formamido-beta-L-arabinose + di-trans,octa-cis-undecaprenyl phosphate = 4-deoxy-4-formamido-alpha-L-arabinopyranosyl di-trans,octa-cis-undecaprenyl phosphate + UDP. It participates in glycolipid biosynthesis; 4-amino-4-deoxy-alpha-L-arabinose undecaprenyl phosphate biosynthesis; 4-amino-4-deoxy-alpha-L-arabinose undecaprenyl phosphate from UDP-4-deoxy-4-formamido-beta-L-arabinose and undecaprenyl phosphate: step 1/2. The protein operates within bacterial outer membrane biogenesis; lipopolysaccharide biosynthesis. In terms of biological role, catalyzes the transfer of 4-deoxy-4-formamido-L-arabinose from UDP to undecaprenyl phosphate. The modified arabinose is attached to lipid A and is required for resistance to polymyxin and cationic antimicrobial peptides. This Escherichia fergusonii (strain ATCC 35469 / DSM 13698 / CCUG 18766 / IAM 14443 / JCM 21226 / LMG 7866 / NBRC 102419 / NCTC 12128 / CDC 0568-73) protein is Undecaprenyl-phosphate 4-deoxy-4-formamido-L-arabinose transferase.